Here is a 277-residue protein sequence, read N- to C-terminus: Shikimate dehydrogenase (NADP(+)) (277 aa).

Shikimate is bound by residues 15 to 17 (SLS) and Thr62. Lys66 functions as the Proton acceptor in the catalytic mechanism. Residues Asn87 and Asp102 each coordinate shikimate. Residues 127–131 (GAGGA) and Ile219 each bind NADP(+). Residue Tyr221 participates in shikimate binding. Gly242 contacts NADP(+).

The protein belongs to the shikimate dehydrogenase family. In terms of assembly, homodimer.

It catalyses the reaction shikimate + NADP(+) = 3-dehydroshikimate + NADPH + H(+). The protein operates within metabolic intermediate biosynthesis; chorismate biosynthesis; chorismate from D-erythrose 4-phosphate and phosphoenolpyruvate: step 4/7. In terms of biological role, involved in the biosynthesis of the chorismate, which leads to the biosynthesis of aromatic amino acids. Catalyzes the reversible NADPH linked reduction of 3-dehydroshikimate (DHSA) to yield shikimate (SA). The sequence is that of Shikimate dehydrogenase (NADP(+)) from Bacillus cytotoxicus (strain DSM 22905 / CIP 110041 / 391-98 / NVH 391-98).